The following is a 699-amino-acid chain: Protein STRUBBELIG-RECEPTOR FAMILY 5 (699 aa).

Residues 1-22 (MTQKLVRLVIVSLAITVTLLQA) form the signal peptide. Residues 23–273 (KTDNQEVSAL…DGGGITAGTG (251 aa)) are Extracellular-facing. LRR repeat units follow at residues 93–115 (SLTT…LPPN), 116–136 (IANL…SLSQ), 139–161 (NLQS…FQKL), 163–186 (KLET…ANLT), and 187–209 (SLKK…RNLA). N-linked (GlcNAc...) asparagine glycosylation occurs at Asn-184. Residues 239 to 263 (NDWSTETAPPPPPGVKYGRKSSGSK) form a disordered region. Residues 274 to 294 (MVIAGACLGVLVLIIVLIALV) traverse the membrane as a helical segment. Over 295 to 699 (SKKKSSLSPH…SYRAHDDYDY (405 aa)) the chain is Cytoplasmic. Position 368 is a phosphoserine (Ser-368). A Protein kinase domain is found at 404 to 675 (FSPGNLLGEG…SEVVEALVRM (272 aa)). ATP contacts are provided by residues 410–418 (LGEGSIGRV) and Lys-432.

This sequence belongs to the protein kinase superfamily. Ser/Thr protein kinase family. As to expression, expressed in leaves and flowers.

The protein localises to the membrane. In Arabidopsis thaliana (Mouse-ear cress), this protein is Protein STRUBBELIG-RECEPTOR FAMILY 5 (SRF5).